A 165-amino-acid chain; its full sequence is Phosphopantetheine adenylyltransferase (165 aa).

Thr-9 lines the substrate pocket. Residues 9–10 (TF) and His-17 contribute to the ATP site. Positions 41, 73, and 87 each coordinate substrate. Residues 88-90 (GLR), Glu-98, and 123-129 (YQFISGT) contribute to the ATP site.

The protein belongs to the bacterial CoaD family. Homohexamer. Mg(2+) is required as a cofactor.

It is found in the cytoplasm. The enzyme catalyses (R)-4'-phosphopantetheine + ATP + H(+) = 3'-dephospho-CoA + diphosphate. It participates in cofactor biosynthesis; coenzyme A biosynthesis; CoA from (R)-pantothenate: step 4/5. In terms of biological role, reversibly transfers an adenylyl group from ATP to 4'-phosphopantetheine, yielding dephospho-CoA (dPCoA) and pyrophosphate. In Burkholderia orbicola (strain MC0-3), this protein is Phosphopantetheine adenylyltransferase.